Here is a 511-residue protein sequence, read N- to C-terminus: Maturase K (511 aa).

It belongs to the intron maturase 2 family. MatK subfamily.

It localises to the plastid. The protein localises to the chloroplast. Usually encoded in the trnK tRNA gene intron. Probably assists in splicing its own and other chloroplast group II introns. The polypeptide is Maturase K (Pistia stratiotes (Water lettuce)).